The sequence spans 207 residues: Large ribosomal subunit protein uL4 (207 aa).

The protein belongs to the universal ribosomal protein uL4 family. In terms of assembly, part of the 50S ribosomal subunit.

One of the primary rRNA binding proteins, this protein initially binds near the 5'-end of the 23S rRNA. It is important during the early stages of 50S assembly. It makes multiple contacts with different domains of the 23S rRNA in the assembled 50S subunit and ribosome. Its function is as follows. Forms part of the polypeptide exit tunnel. In Rickettsia rickettsii (strain Iowa), this protein is Large ribosomal subunit protein uL4.